We begin with the raw amino-acid sequence, 319 residues long: Probable arabinan endo-1,5-alpha-L-arabinosidase C (319 aa).

A signal peptide spans 1–16 (MFVYTLIFLFLAAANA). Asp-31 serves as the catalytic Proton acceptor. The N-linked (GlcNAc...) asparagine glycan is linked to Asn-190. Residue Glu-198 is the Proton donor of the active site. Asn-222 carries N-linked (GlcNAc...) asparagine glycosylation.

It belongs to the glycosyl hydrolase 43 family.

It localises to the secreted. The catalysed reaction is Endohydrolysis of (1-&gt;5)-alpha-arabinofuranosidic linkages in (1-&gt;5)-arabinans.. The protein operates within glycan metabolism; L-arabinan degradation. Endo-1,5-alpha-L-arabinanase involved in degradation of pectin. Its preferred substrate is linear 1,5-alpha-L-arabinan. The chain is Probable arabinan endo-1,5-alpha-L-arabinosidase C (abnC) from Aspergillus clavatus (strain ATCC 1007 / CBS 513.65 / DSM 816 / NCTC 3887 / NRRL 1 / QM 1276 / 107).